Consider the following 215-residue polypeptide: Protein GET1 (215 aa).

The Lumenal segment spans residues Met1–Leu4. The chain crosses the membrane as a helical span at residues Ala5–Ser24. Residues Val25–Leu108 lie on the Cytoplasmic side of the membrane. A coiled-coil region spans residues Ala73–Ser94. Residues Trp109–Phe129 traverse the membrane as a helical segment. Topologically, residues Trp130–Ser153 are lumenal. Residues Val154–Leu170 traverse the membrane as a helical segment. Residues Gln171–Asp215 lie on the Cytoplasmic side of the membrane. The interval Pro182–Ala202 is disordered.

Belongs to the WRB/GET1 family. As to quaternary structure, interacts with GET3.

It localises to the endoplasmic reticulum membrane. Functionally, required for the post-translational delivery of tail-anchored (TA) proteins to the endoplasmic reticulum. Acts as a membrane receptor for soluble GET3, which recognizes and selectively binds the transmembrane domain of TA proteins in the cytosol. The chain is Protein GET1 from Cryptococcus neoformans var. neoformans serotype D (strain JEC21 / ATCC MYA-565) (Filobasidiella neoformans).